The primary structure comprises 673 residues: Bifunctional lycopene cyclase/phytoene synthase (673 aa).

The tract at residues Met-1–His-251 is lycopene beta-cyclase. 7 helical membrane-spanning segments follow: residues Ile-9–Leu-29, Lys-36–Ile-56, Tyr-81–Ala-101, Ser-117–Ala-137, Leu-157–Phe-177, Thr-187–Gly-207, and Val-226–Leu-246. The phytoene synthase stretch occupies residues Leu-258–Gln-673. A disordered region spans residues Lys-376–Pro-399.

The protein in the N-terminal section; belongs to the lycopene beta-cyclase family. In the C-terminal section; belongs to the phytoene/squalene synthase family.

Its subcellular location is the membrane. It carries out the reaction all-trans-lycopene = gamma-carotene. It catalyses the reaction gamma-carotene = all-trans-beta-carotene. The enzyme catalyses 2 (2E,6E,10E)-geranylgeranyl diphosphate = 15-cis-phytoene + 2 diphosphate. It participates in carotenoid biosynthesis; beta-carotene biosynthesis. The protein operates within carotenoid biosynthesis; phytoene biosynthesis; all-trans-phytoene from geranylgeranyl diphosphate: step 1/1. In terms of biological role, bifunctional enzyme that catalyzes the reactions from geranylgeranyl diphosphate to phytoene (phytoene synthase) and lycopene to beta-carotene via the intermediate gamma-carotene (lycopene cyclase). The cyclase preferentially catalyzes the symmetric cyclization of both ends of the substrate to produce dicyclic carotenoids. Beta-carotene is further processed to the acidic carotenoid astaxanthin. The chain is Bifunctional lycopene cyclase/phytoene synthase from Phaffia rhodozyma (Yeast).